We begin with the raw amino-acid sequence, 512 residues long: Proline--tRNA ligase (512 aa).

Over residues 460–470 (SDEDDEQDTTD) the composition is skewed to acidic residues. The interval 460 to 484 (SDEDDEQDTTDENMGVNNDTTVESN) is disordered.

Belongs to the class-II aminoacyl-tRNA synthetase family. ProS type 3 subfamily. In terms of assembly, homodimer.

The protein resides in the cytoplasm. The enzyme catalyses tRNA(Pro) + L-proline + ATP = L-prolyl-tRNA(Pro) + AMP + diphosphate. In terms of biological role, catalyzes the attachment of proline to tRNA(Pro) in a two-step reaction: proline is first activated by ATP to form Pro-AMP and then transferred to the acceptor end of tRNA(Pro). This Haloquadratum walsbyi (strain DSM 16790 / HBSQ001) protein is Proline--tRNA ligase.